The primary structure comprises 242 residues: Probable transcriptional regulatory protein PG_0097 (242 aa).

The protein belongs to the TACO1 family.

It localises to the cytoplasm. This is Probable transcriptional regulatory protein PG_0097 from Porphyromonas gingivalis (strain ATCC BAA-308 / W83).